Reading from the N-terminus, the 267-residue chain is Undecaprenyl-diphosphatase (267 aa).

Transmembrane regions (helical) follow at residues 1–21 (MSEL…FLPI), 39–59 (QGLA…LIYF), 87–107 (WWIL…KSLV), 113–133 (SGYV…WADA), 144–164 (TGLK…IPGT), 189–209 (FLMS…KFIL), 219–239 (LFLG…VFLI), and 244–264 (VGMM…FYIL).

It belongs to the UppP family.

Its subcellular location is the cell inner membrane. It catalyses the reaction di-trans,octa-cis-undecaprenyl diphosphate + H2O = di-trans,octa-cis-undecaprenyl phosphate + phosphate + H(+). Catalyzes the dephosphorylation of undecaprenyl diphosphate (UPP). Confers resistance to bacitracin. The sequence is that of Undecaprenyl-diphosphatase from Psychromonas ingrahamii (strain DSM 17664 / CCUG 51855 / 37).